The primary structure comprises 594 residues: Potassium-transporting ATPase potassium-binding subunit (594 aa).

10 helical membrane passes run 3–23 (ADFL…APLL), 67–87 (AVAM…LQRL), 136–156 (ALTV…IALV), 179–199 (LYVL…QGVV), 287–307 (LEML…GEMV), 314–334 (VAIL…AAYF), 415–435 (GLYG…LMIG), 453–473 (VALV…VAVL), 519–539 (VLLG…ILAL), and 562–582 (LFVA…YVPA).

It belongs to the KdpA family. In terms of assembly, the system is composed of three essential subunits: KdpA, KdpB and KdpC.

The protein localises to the cell inner membrane. In terms of biological role, part of the high-affinity ATP-driven potassium transport (or Kdp) system, which catalyzes the hydrolysis of ATP coupled with the electrogenic transport of potassium into the cytoplasm. This subunit binds the periplasmic potassium ions and delivers the ions to the membrane domain of KdpB through an intramembrane tunnel. The polypeptide is Potassium-transporting ATPase potassium-binding subunit (Bordetella bronchiseptica (strain ATCC BAA-588 / NCTC 13252 / RB50) (Alcaligenes bronchisepticus)).